A 276-amino-acid polypeptide reads, in one-letter code: Putative oxidoreductase SadH (276 aa).

S142 serves as a coordination point for substrate. Y155 acts as the Proton acceptor in catalysis.

The protein belongs to the short-chain dehydrogenases/reductases (SDR) family.

In terms of biological role, required for maintaining the appropriate mycolic acid composition and permeability of the envelope on its exposure to acidic pH. The sequence is that of Putative oxidoreductase SadH (sadH) from Mycobacterium tuberculosis (strain CDC 1551 / Oshkosh).